The sequence spans 433 residues: Serine--tRNA ligase (433 aa).

235-237 (TSE) provides a ligand contact to L-serine. Position 266–268 (266–268 (RSE)) interacts with ATP. Glu-289 is an L-serine binding site. ATP is bound at residue 353 to 356 (EISS). Position 388 (Ser-388) interacts with L-serine.

This sequence belongs to the class-II aminoacyl-tRNA synthetase family. Type-1 seryl-tRNA synthetase subfamily. As to quaternary structure, homodimer. The tRNA molecule binds across the dimer.

It localises to the cytoplasm. The enzyme catalyses tRNA(Ser) + L-serine + ATP = L-seryl-tRNA(Ser) + AMP + diphosphate + H(+). The catalysed reaction is tRNA(Sec) + L-serine + ATP = L-seryl-tRNA(Sec) + AMP + diphosphate + H(+). It functions in the pathway aminoacyl-tRNA biosynthesis; selenocysteinyl-tRNA(Sec) biosynthesis; L-seryl-tRNA(Sec) from L-serine and tRNA(Sec): step 1/1. In terms of biological role, catalyzes the attachment of serine to tRNA(Ser). Is also able to aminoacylate tRNA(Sec) with serine, to form the misacylated tRNA L-seryl-tRNA(Sec), which will be further converted into selenocysteinyl-tRNA(Sec). The chain is Serine--tRNA ligase from Burkholderia cenocepacia (strain HI2424).